The following is a 268-amino-acid chain: Proenkephalin-A (268 aa).

Positions 1 to 24 (MARFLRLCTWLLVLGSCLLATVQA) are cleaved as a signal peptide. Intrachain disulfides connect cysteine 26–cysteine 48, cysteine 30–cysteine 52, and cysteine 33–cysteine 65. Residues 162–185 (GTGDNRAREGRHQESTDNDDNMSK) form a disordered region. Over residues 166-176 (NRAREGRHQES) the composition is skewed to basic and acidic residues. 2 propeptides span residues 197–208 (SPQVEDEAKELQ) and 218–228 (VGRPEWWMDYQ). Phosphoserine is present on serine 252.

This sequence belongs to the opioid neuropeptide precursor family. Proenkephalin-A is cleaved by CTSL to generate Met-enkephalin. In terms of processing, processed and degraded by ACE. Post-translationally, probably cleaved by ACE. Processed by ACE to generate Met-enkephalin in the nucleus accumbens of the brain. In terms of processing, the N-terminal domain contains 6 conserved cysteines thought to be involved in disulfide bonding and/or processing.

The protein localises to the cytoplasmic vesicle. It localises to the secretory vesicle. The protein resides in the chromaffin granule lumen. Its subcellular location is the secreted. Its function is as follows. Neuropeptide that competes with and mimic the effects of opiate drugs. They play a role in a number of physiologic functions, including pain perception and responses to stress. In terms of biological role, met-enkephalin-Arg-Phe neuropeptide acts as a strong ligand of Mu-type opioid receptor OPRM1. Met-enkephalin-Arg-Phe-binding to OPRM1 in the nucleus accumbens of the brain increases activation of OPRM1, leading to long-term synaptic depression of glutamate release. Functionally, increases glutamate release in the striatum and decreases GABA concentration in the striatum. Increases glutamate release in the striatum. In Mesocricetus auratus (Golden hamster), this protein is Proenkephalin-A (PENK).